We begin with the raw amino-acid sequence, 341 residues long: Phosphoribosylformylglycinamidine cyclo-ligase (341 aa).

Belongs to the AIR synthase family.

The protein localises to the cytoplasm. It catalyses the reaction 2-formamido-N(1)-(5-O-phospho-beta-D-ribosyl)acetamidine + ATP = 5-amino-1-(5-phospho-beta-D-ribosyl)imidazole + ADP + phosphate + H(+). The protein operates within purine metabolism; IMP biosynthesis via de novo pathway; 5-amino-1-(5-phospho-D-ribosyl)imidazole from N(2)-formyl-N(1)-(5-phospho-D-ribosyl)glycinamide: step 2/2. This chain is Phosphoribosylformylglycinamidine cyclo-ligase, found in Xanthomonas oryzae pv. oryzae (strain MAFF 311018).